A 451-amino-acid polypeptide reads, in one-letter code: Vitamin D3 receptor (451 aa).

The nuclear receptor DNA-binding region spans 44–112 (PRICGVCGDR…RLKRCVDIGM (69 aa)). Zn(2+) is bound by residues Cys-47, Cys-50, Cys-64, Cys-67, Cys-83, Cys-89, Cys-99, and Cys-102. 2 consecutive NR C4-type zinc fingers follow at residues 47–67 (CGVC…CEGC) and 83–107 (CPFN…LKRC). Hinge stretches follow at residues 113–149 (MKEF…KLSE) and 120–149 (DEEV…KLSE). The region spanning 150–447 (EQQKVIDTLL…LTPLVLEVFG (298 aa)) is the NR LBD domain. Ser-261 lines the calcitriol pocket. Positions 270–288 (KMIPGFRDLTAEDQIALLK) are interaction with coactivator LXXLL motif. Calcitriol-binding residues include Arg-298, Ser-302, His-329, and His-421. A 9aaTAD motif is present at residues 440–448 (PLVLEVFGN).

The protein belongs to the nuclear hormone receptor family. NR1 subfamily. Homodimer in the absence of bound vitamin D3. Heterodimer with RXRA after vitamin D3 binding. As to expression, expressed in kidney and intestine.

Its subcellular location is the nucleus. It localises to the cytoplasm. Functionally, nuclear receptor for calcitriol, the active form of vitamin D3 which mediates the action of this vitamin on cells. Enters the nucleus upon vitamin D3 binding where it forms heterodimers with the retinoid X receptor/RXR. The VDR-RXR heterodimers bind to specific response elements on DNA and activate the transcription of vitamin D3-responsive target genes. Plays a central role in calcium homeostasis. Also functions as a receptor for the secondary bile acid lithocholic acid (LCA) and its metabolites. The protein is Vitamin D3 receptor (VDR) of Gallus gallus (Chicken).